A 570-amino-acid polypeptide reads, in one-letter code: Glutamate--tRNA ligase (570 aa).

The 'HIGH' region motif lies at 105-115 (PNPDGAFHLGN).

This sequence belongs to the class-I aminoacyl-tRNA synthetase family. Glutamate--tRNA ligase type 2 subfamily.

Its subcellular location is the cytoplasm. It carries out the reaction tRNA(Glu) + L-glutamate + ATP = L-glutamyl-tRNA(Glu) + AMP + diphosphate. Functionally, catalyzes the attachment of glutamate to tRNA(Glu) in a two-step reaction: glutamate is first activated by ATP to form Glu-AMP and then transferred to the acceptor end of tRNA(Glu). The polypeptide is Glutamate--tRNA ligase (Pyrococcus horikoshii (strain ATCC 700860 / DSM 12428 / JCM 9974 / NBRC 100139 / OT-3)).